A 1057-amino-acid polypeptide reads, in one-letter code: Structural maintenance of chromosomes protein 6B (1057 aa).

A Zinc-hook domain is found at Ile-22–Ile-1047. Position 49 to 56 (Gly-49 to Ser-56) interacts with ATP. Residues Lys-135–Lys-448 are a coiled coil. The tract at residues Val-449 to Leu-632 is flexible hinge. A coiled-coil region spans residues Cys-633 to Cys-904. Over residues Lys-818–Ala-828 the composition is skewed to basic and acidic residues. Residues Lys-818–Gly-845 form a disordered region.

It belongs to the SMC family. SMC6 subfamily. In terms of assembly, forms a heterodimer with SMC5. The SMC5-SMC6 complex is composed of the SMC5 and SMC6 heterodimer attached via their hinge domain and from the non-SMC subunit NSE4A or NSE4B. As to expression, expressed in seedlings, rosette leaves and floral buds.

The protein localises to the nucleus. It is found in the chromosome. Functionally, core component of the SMC5-SMC6 complex that promotes sister chromatid alignment after DNA damage and facilitates double-stranded DNA breaks (DSBs) repair via homologous recombination between sister chromatids. The polypeptide is Structural maintenance of chromosomes protein 6B (SMC6B) (Arabidopsis thaliana (Mouse-ear cress)).